The following is a 144-amino-acid chain: Large ribosomal subunit protein uL15 (144 aa).

The interval 1–54 (MRLNTLSPAEGSKKAGKRLGRGIGSGLGKTGGRGHKGQKSRSGGGVRRGFEGGQ) is disordered. A compositionally biased stretch (gly residues) spans 21 to 31 (RGIGSGLGKTG).

The protein belongs to the universal ribosomal protein uL15 family. As to quaternary structure, part of the 50S ribosomal subunit.

In terms of biological role, binds to the 23S rRNA. This is Large ribosomal subunit protein uL15 from Klebsiella pneumoniae (strain 342).